We begin with the raw amino-acid sequence, 65 residues long: uncharacterized protein (65 aa).

The segment at 1 to 22 (MEKETPQQETKQSTNKESGFFD) is disordered. Over residues 7 to 17 (QQETKQSTNKE) the composition is skewed to polar residues. Residues 22–65 (DEIIKRTNQLLEKEKELHEKYNKEITSQQDQIDQLKKKINQLKY) are a coiled coil.

This is an uncharacterized protein from Dictyostelium discoideum (Social amoeba).